Reading from the N-terminus, the 1821-residue chain is Latent-transforming growth factor beta-binding protein 2 (1821 aa).

The first 35 residues, 1-35 (MRPRTKARSPGRALRNPWRGFLPLTLALFVGAGHA), serve as a signal peptide directing secretion. Disordered stretches follow at residues 38-58 (DPVGRYEPAGGDANRLRRPGG) and 81-165 (GLQP…RLTG). The tract at residues 94–115 (SPRRPTEAEARRPSRAQQSRRV) is heparin-binding. Composition is skewed to low complexity over residues 108–120 (RAQQSRRVQPPAQ) and 129–145 (QQQPAPRTRAAPALPRL). Asn-181 carries N-linked (GlcNAc...) asparagine glycosylation. One can recognise an EGF-like 1 domain in the interval 187–219 (IKPVCEPPCQNRGSCSRPQLCVCRSGFRGARCE). Intrachain disulfides connect Cys-191/Cys-201, Cys-195/Cys-207, and Cys-209/Cys-218. A disordered region spans residues 229-339 (PQNSRLAPRR…AVPLEHPSSP (111 aa)). The heparin-binding stretch occupies residues 232–249 (SRLAPRRWAERSPNLRRS). Over residues 262-274 (PPAPQSPPAPQSP) the composition is skewed to pro residues. Polar residues-rich tracts occupy residues 280 to 292 (SGLSQTHPSQQHV) and 304 to 314 (ATASSQLSSNA). A glycan (N-linked (GlcNAc...) asparagine) is linked at Asn-343. 344–354 (LTEKIKKIKIV) lines the heparin pocket. A Cell attachment site motif is present at residues 375–377 (RGD). Residues 396–428 (RIYFCQIPCLNGGRCIGRDECWCPANSTGKFCH) enclose the EGF-like 2 domain. Intrachain disulfides connect Cys-400–Cys-410, Cys-404–Cys-416, and Cys-418–Cys-427. Asn-421 carries N-linked (GlcNAc...) asparagine glycosylation. Ser-506 is modified (phosphoserine). The disordered stretch occupies residues 510-544 (RPPPWLPASPGHSLWDSNNIPARSGEPPRPLPPAA). One can recognise a TB 1 domain in the interval 552–604 (GRCYLNTVNGQCANPLLELTTQEDCCGSVGAFWGVTLCAPCPPRPASPVIENG). Intrachain disulfides connect Cys-554-Cys-576, Cys-563-Cys-589, and Cys-577-Cys-592. Residue Asn-616 is glycosylated (N-linked (GlcNAc...) asparagine). An EGF-like 3; calcium-binding domain is found at 622 to 662 (DINECLTLGLCKDAECVNTRGSYLCTCRPGLMLDPSRSRCV). Cystine bridges form between Cys-626/Cys-637, Cys-632/Cys-646, Cys-648/Cys-661, Cys-674/Cys-696, Cys-683/Cys-709, Cys-697/Cys-712, and Cys-698/Cys-724. The TB 2 domain occupies 672-724 (GLCYRSLGPGTCTLPLAQRITKQICCCSRVGKAWGSECEKCPLPGTEAFREIC). Over residues 744-757 (AEEEELARPPREQG) the composition is skewed to basic and acidic residues. Residues 744-772 (AEEEELARPPREQGQRSSGALPGPAERQP) are disordered. Asn-811 carries N-linked (GlcNAc...) asparagine glycosylation. The EGF-like 4 domain maps to 844–886 (GIDRCAAGATNVCGPGTCVNLPDGYRCVCSPGYQLHPSQAYCT). Cystine bridges form between Cys-848-Cys-861, Cys-856-Cys-870, Cys-872-Cys-885, Cys-891-Cys-902, Cys-896-Cys-911, Cys-913-Cys-928, Cys-934-Cys-945, Cys-940-Cys-954, Cys-956-Cys-968, Cys-974-Cys-985, Cys-980-Cys-994, Cys-997-Cys-1008, Cys-1014-Cys-1025, Cys-1020-Cys-1034, Cys-1036-Cys-1049, Cys-1055-Cys-1066, Cys-1061-Cys-1075, Cys-1078-Cys-1091, Cys-1097-Cys-1108, Cys-1103-Cys-1117, Cys-1120-Cys-1133, Cys-1139-Cys-1151, Cys-1146-Cys-1160, Cys-1162-Cys-1174, Cys-1180-Cys-1192, Cys-1186-Cys-1201, Cys-1203-Cys-1216, Cys-1222-Cys-1233, Cys-1228-Cys-1242, Cys-1244-Cys-1257, Cys-1263-Cys-1276, Cys-1271-Cys-1285, Cys-1289-Cys-1301, Cys-1307-Cys-1319, Cys-1313-Cys-1328, Cys-1330-Cys-1343, Cys-1349-Cys-1361, Cys-1356-Cys-1370, Cys-1372-Cys-1386, Cys-1413-Cys-1436, Cys-1423-Cys-1448, Cys-1437-Cys-1451, Cys-1438-Cys-1463, Cys-1489-Cys-1502, Cys-1497-Cys-1511, Cys-1513-Cys-1526, Cys-1532-Cys-1542, Cys-1537-Cys-1551, and Cys-1553-Cys-1566. An EGF-like 5; calcium-binding domain is found at 887-929 (DDNECLRDPCKGKGRCINRVGSYSCFCYPGYTLATSGATQECQ). The 40-residue stretch at 930–969 (DINECEQPGVCSGGQCTNTEGSYHCECDQGYIMVRKGHCQ) folds into the EGF-like 6; calcium-binding domain. Residues 970-1009 (DINECRHPGTCPDGRCVNSPGSYTCLACEEGYRGQSGSCV) form the EGF-like 7; calcium-binding domain. An EGF-like 8; calcium-binding domain is found at 1010–1050 (DVNECLTPGVCAHGKCTNLEGSFRCSCEQGYEVTSDEKGCQ). The 42-residue stretch at 1051–1092 (DVDECASRASCPTGLCLNTEGSFACSACENGYWVNEDGTACE) folds into the EGF-like 9; calcium-binding domain. An EGF-like 10; calcium-binding domain is found at 1093–1134 (DLDECAFPGVCPSGVCTNTAGSFSCKDCDGGYRPSPLGDSCE). One can recognise an EGF-like 11; calcium-binding domain in the interval 1135–1175 (DVDECEDPQSSCLGGECKNTVGSYQCLCPQGFQLANGTVCE). The N-linked (GlcNAc...) asparagine glycan is linked to Asn-1170. The 42-residue stretch at 1176-1217 (DVNECMGEEHCAPHGECLNSHGSFFCLCAPGFVSAEGGTSCQ) folds into the EGF-like 12; calcium-binding domain. The EGF-like 13; calcium-binding domain maps to 1218–1258 (DVDECATTDPCVGGHCVNTEGSFNCLCETGFQPSPESGECV). Positions 1259–1302 (DIDECEDYGDPVCGTWKCENSPGSYRCVLGCQPGFHMAPNGDCI) constitute an EGF-like 14; calcium-binding domain. The EGF-like 15; calcium-binding domain occupies 1303–1344 (DIDECANDTMCGSHGFCDNTDGSFRCLCDQGFEISPSGWDCV). Residue Asn-1309 is glycosylated (N-linked (GlcNAc...) asparagine). The 43-residue stretch at 1345–1387 (DVNECELMLAVCGAALCENVEGSFLCLCASDLEEYDAQEGHCR) folds into the EGF-like 16; calcium-binding domain. One can recognise a TB 3 domain in the interval 1411 to 1463 (MDCYSGQKGHAPCSSVLGRNTTQAECCCTQGASWGDACDLCPSEDSAEFSEIC). Asn-1430 is a glycosylation site (N-linked (GlcNAc...) asparagine). Residues 1485-1527 (DADECVIFGPGLCPNGRCLNTVPGYVCLCNPGFHYDASHKKCE) enclose the EGF-like 17; calcium-binding domain. The EGF-like 18; calcium-binding domain occupies 1528 to 1567 (DHDECQDLACENGECVNTEGSFHCFCSPPLTLDLSQQRCM). An N-linked (GlcNAc...) asparagine glycan is attached at Asn-1568. In terms of domain architecture, TB 4 spans 1584–1636 (DICWKKVTNDVCSEPLRGHRTTYTECCCQDGEAWSQQCALCPPRSSEVYAQLC). 10 disulfides stabilise this stretch: Cys-1586–Cys-1609, Cys-1595–Cys-1621, Cys-1610–Cys-1624, Cys-1611–Cys-1636, Cys-1737–Cys-1748, Cys-1743–Cys-1757, Cys-1759–Cys-1772, Cys-1778–Cys-1793, Cys-1788–Cys-1802, and Cys-1804–Cys-1817. Positions 1639–1821 (ARIEAEREAG…AGPPHCTAKE (183 aa)) are C-terminal domain. The region spanning 1733–1773 (QAEECGILNGCENGRCVRVREGYTCDCFEGFQLDAAHMACV) is the EGF-like 19; calcium-binding domain. The EGF-like 20; calcium-binding domain occupies 1774–1818 (DVNECDDLNGPAVLCVHGYCENTEGSYRCHCSPGYVAEAGPPHCT).

Belongs to the LTBP family. In terms of assembly, forms part of the large latent transforming growth factor beta precursor complex; removal is essential for activation of complex. Interacts with SDC4. Interacts (via C-terminal domain) with FBN1 (via N-terminal domain) in a Ca(+2)-dependent manner. Post-translationally, N-Glycosylated. In terms of processing, contains hydroxylated asparagine residues. As to expression, expressed in the aorta (at protein level). Expressed in lung, weakly expressed in heart, placenta, liver and skeletal muscle.

It localises to the secreted. The protein resides in the extracellular space. It is found in the extracellular matrix. Its function is as follows. May play an integral structural role in elastic-fiber architectural organization and/or assembly. This chain is Latent-transforming growth factor beta-binding protein 2 (LTBP2), found in Homo sapiens (Human).